The primary structure comprises 103 residues: Growth-regulated alpha protein (103 aa).

Positions 1 to 30 are cleaved as a signal peptide; sequence MARAANPAPRLLGAAMLLLLLVAAGRRAAG. Disulfide bonds link cysteine 39–cysteine 65 and cysteine 41–cysteine 81.

Belongs to the intercrine alpha (chemokine CxC) family.

It localises to the secreted. Functionally, has chemotactic activity for neutrophils. The chain is Growth-regulated alpha protein (CXCL1) from Ovis aries (Sheep).